We begin with the raw amino-acid sequence, 243 residues long: Small ribosomal subunit protein uS3 (243 aa).

One can recognise a KH type-2 domain in the interval 39 to 107 (MRKFVMSELK…ETHLNIVEVR (69 aa)). Residues 214-243 (ASERRAMEGDAQGPASRDRDRDRDRRRDNA) are disordered. The segment covering 229–243 (SRDRDRDRDRRRDNA) has biased composition (basic and acidic residues).

The protein belongs to the universal ribosomal protein uS3 family. Part of the 30S ribosomal subunit. Forms a tight complex with proteins S10 and S14.

In terms of biological role, binds the lower part of the 30S subunit head. Binds mRNA in the 70S ribosome, positioning it for translation. The polypeptide is Small ribosomal subunit protein uS3 (Rhizobium leguminosarum bv. trifolii (strain WSM2304)).